We begin with the raw amino-acid sequence, 268 residues long: MTLQKKIIELLGVKPLIIPKKEIENRIQILKRYLIENTHLKTLIVGISGGQDSTLTGKLCQLSIQELRKEKKEKSYQFIALRLPYGVQIDEKDCRDAINFINPDQIFTINIKNAVLNSERSLKKQGIQISDYIKGNEKARERMKVQYSFAAITNGLVVGTGNAAENVTGFFTKYGDNGTDVNLISKLNKRQGKFLLKELNCPKHLYLKKPTADLEDEKPQKEDEVALGIKYNIIDDYLEGKKVNSLNKQIIERLYLTTEHKRKIINLG.

46–53 (GISGGQDS) is a binding site for ATP. A Mg(2+)-binding site is contributed by D52. R140 lines the deamido-NAD(+) pocket. T160 is an ATP binding site. A Mg(2+)-binding site is contributed by E165. The deamido-NAD(+) site is built by K173 and D180. Residues K189 and T211 each coordinate ATP. 260 to 261 (HK) provides a ligand contact to deamido-NAD(+).

It belongs to the NAD synthetase family. Homodimer.

It carries out the reaction deamido-NAD(+) + NH4(+) + ATP = AMP + diphosphate + NAD(+) + H(+). Its pathway is cofactor biosynthesis; NAD(+) biosynthesis; NAD(+) from deamido-NAD(+) (ammonia route): step 1/1. In terms of biological role, catalyzes the ATP-dependent amidation of deamido-NAD to form NAD. Uses ammonia as a nitrogen source. This Buchnera aphidicola subsp. Schizaphis graminum (strain Sg) protein is NH(3)-dependent NAD(+) synthetase.